The primary structure comprises 190 residues: Adenylate kinase (190 aa).

12–17 (GSGKTT) contributes to the ATP binding site. The tract at residues 34 to 63 (STGDLLREEVASGSEYGKTIDSFISKGNLV) is NMP. AMP contacts are provided by residues T35, R40, 61–63 (NLV), 88–91 (GYPR), and Q95. Residues 130–136 (GRARGAD) form an LID region. ATP is bound at residue R131. AMP contacts are provided by R133 and R145. R173 provides a ligand contact to ATP.

This sequence belongs to the adenylate kinase family. Monomer.

It localises to the cytoplasm. It catalyses the reaction AMP + ATP = 2 ADP. It participates in purine metabolism; AMP biosynthesis via salvage pathway; AMP from ADP: step 1/1. Its function is as follows. Catalyzes the reversible transfer of the terminal phosphate group between ATP and AMP. Plays an important role in cellular energy homeostasis and in adenine nucleotide metabolism. The protein is Adenylate kinase of Helicobacter hepaticus (strain ATCC 51449 / 3B1).